The primary structure comprises 388 residues: LL-diaminopimelate aminotransferase (388 aa).

The substrate site is built by Y16 and G41. Residues Y70, 104-105 (SK), Y129, N179, Y210, and 239-241 (SLS) contribute to the pyridoxal 5'-phosphate site. 3 residues coordinate substrate: K105, Y129, and N179. Position 242 is an N6-(pyridoxal phosphate)lysine (K242). Pyridoxal 5'-phosphate is bound at residue R250. Position 368 (R368) interacts with substrate.

It belongs to the class-I pyridoxal-phosphate-dependent aminotransferase family. LL-diaminopimelate aminotransferase subfamily. In terms of assembly, homodimer. It depends on pyridoxal 5'-phosphate as a cofactor.

The enzyme catalyses (2S,6S)-2,6-diaminopimelate + 2-oxoglutarate = (S)-2,3,4,5-tetrahydrodipicolinate + L-glutamate + H2O + H(+). It functions in the pathway amino-acid biosynthesis; L-lysine biosynthesis via DAP pathway; LL-2,6-diaminopimelate from (S)-tetrahydrodipicolinate (aminotransferase route): step 1/1. In terms of biological role, involved in the synthesis of meso-diaminopimelate (m-DAP or DL-DAP), required for both lysine and peptidoglycan biosynthesis. Catalyzes the direct conversion of tetrahydrodipicolinate to LL-diaminopimelate. In Oleidesulfovibrio alaskensis (strain ATCC BAA-1058 / DSM 17464 / G20) (Desulfovibrio alaskensis), this protein is LL-diaminopimelate aminotransferase.